The chain runs to 87 residues: COMM domain-containing protein 6 (87 aa).

At Met-1 the chain carries N-acetylmethionine. The COMM domain occupies 20-87 (QLIDFQWKLG…KEIAAVIETV (68 aa)).

The protein belongs to the COMM domain-containing protein 6 family. As to quaternary structure, component of the commander complex consisting of the CCC subcomplex and the retriever subcomplex. Component of the CCC (COMMD/CCDC22/CCDC93) subcomplex consisting of COMMD1, COMMD2, COMMD3, COMMD4, COMMD5, COMMD6, COMMD7, COMMD8, COMMD9, COMMD10, CCDC22 and CCDC93; within the complex forms a heterodimer with COMMD1. May form a homodimer with isoform 1. Interacts with RELA, RELB, NFKB1/p105. Does not interact with NFKBIB. Interacts with CCDC22, CCDC93, SCNN1B, CUL4A.

The protein resides in the nucleus. It is found in the cytoplasm. Its function is as follows. Scaffold protein in the commander complex that is essential for endosomal recycling of transmembrane cargos; the commander complex is composed of the CCC subcomplex and the retriever subcomplex. May modulate activity of cullin-RING E3 ubiquitin ligase (CRL) complexes. Down-regulates activation of NF-kappa-B. Inhibits TNF-induced NFKB1 activation. This Mus musculus (Mouse) protein is COMM domain-containing protein 6 (Commd6).